Consider the following 316-residue polypeptide: NADH-cytochrome b5 reductase-like (316 aa).

Residues 17 to 53 (KPVEPLPSQCCGSGCSPCVFDLYYRDLERWETARARN) form the Oxidoreductase-like domain. Positions 76–178 (ETFLAFHIST…RGPFGSFLYE (103 aa)) constitute an FAD-binding FR-type domain. FAD contacts are provided by residues 158–173 (ESWRTGDTAFWRGPFG) and 183–215 (GELLMLAAGTGLAPMVPILQSITDDEDDETFVT).

This sequence belongs to the flavoprotein pyridine nucleotide cytochrome reductase family. Requires FAD as cofactor.

The enzyme catalyses 2 Fe(III)-[cytochrome b5] + NADH = 2 Fe(II)-[cytochrome b5] + NAD(+) + H(+). NADH-cytochrome b5 reductases are involved in desaturation and elongation of fatty acids, cholesterol biosynthesis, drug metabolism, and, in erythrocyte, methemoglobin reduction. The sequence is that of NADH-cytochrome b5 reductase-like (Cyb5rl) from Mus musculus (Mouse).